The primary structure comprises 575 residues: Arginine--tRNA ligase (575 aa).

A 'HIGH' region motif is present at residues 130 to 140; it reads ANPTGPMHVGH.

This sequence belongs to the class-I aminoacyl-tRNA synthetase family. In terms of assembly, monomer.

The protein resides in the cytoplasm. It carries out the reaction tRNA(Arg) + L-arginine + ATP = L-arginyl-tRNA(Arg) + AMP + diphosphate. In Magnetococcus marinus (strain ATCC BAA-1437 / JCM 17883 / MC-1), this protein is Arginine--tRNA ligase.